Consider the following 387-residue polypeptide: Protein REVEILLE 1 (387 aa).

Composition is skewed to polar residues over residues 1–17 (MASS…NASL) and 27–37 (KQIQFNDQSFG). The disordered stretch occupies residues 1-44 (MASSPLTANVQGTNASLRNRDEETADKQIQFNDQSFGGNDYAPK). The HTH myb-type domain occupies 50–104 (TITKERERWTDEEHKKFVEALKLYGRAWRRIEEHVGSKTAVQIRSHAQKFFSKVA). Residues 77–100 (WRRIEEHVGSKTAVQIRSHAQKFF) constitute a DNA-binding region (H-T-H motif). 3 disordered regions span residues 105 to 200 (REAT…TANA), 306 to 334 (KAVQ…TTEP), and 350 to 387 (AFSE…HLHL). The segment covering 124 to 134 (RPKRKPAHPYP) has biased composition (basic residues). The span at 141 to 166 (ADQTSRSVSPSERDTQSPTSVLSTVG) shows a compositional bias: polar residues. Composition is skewed to low complexity over residues 172–200 (SLDS…TANA) and 312–323 (GSSTGSNTGSVD). Residues 324–333 (DTGHTEKTTE) show a composition bias toward basic and acidic residues.

The protein resides in the nucleus. Morning-phased transcription factor integrating the circadian clock and auxin pathways. Binds to the evening element (EE) of promoters. Does not act within the central clock, but regulates free auxin levels in a time-of-day specific manner. Positively regulates the expression of YUC8 during the day, but has no effect during the night. Negative regulator of freezing tolerance. This is Protein REVEILLE 1 (RVE1) from Arabidopsis thaliana (Mouse-ear cress).